A 685-amino-acid polypeptide reads, in one-letter code: Transforming growth factor beta activator LRRC33 (685 aa).

A signal peptide spans 1-27; it reads MPVCGCLSVVLSHAVVLLMLVLHSASG. The Extracellular portion of the chain corresponds to 28–640; it reads HPQTFPCRLI…CGFTNNNKES (613 aa). Positions 29-56 constitute an LRRNT domain; sequence PQTFPCRLIQRVALCSGRQLSVIPDCLP. 7 LRR repeats span residues 57 to 79, 80 to 102, 103 to 129, 130 to 154, 155 to 178, 180 to 201, and 202 to 225; these read HETE…LSRY, PFLR…AFIE, SHLL…AFRS, LTQL…LVAN, LSSL…TFRD, HQLK…AFDH, and MKKL…EMTQ. Asn-154 carries an N-linked (GlcNAc...) asparagine glycan. Asn-230 and Asn-244 each carry an N-linked (GlcNAc...) asparagine glycan. 2 LRR repeats span residues 248–271 and 273–296; these read TFQL…PTNN and IRTL…TSSN. N-linked (GlcNAc...) asparagine glycosylation is found at Asn-291, Asn-296, Asn-309, Asn-312, and Asn-325. LRR repeat units lie at residues 326–349, 351–373, 374–397, 400–423, 425–447, 457–480, 482–503, 505–526, 527–549, 551–571, and 573–596; these read LSSV…FIKQ, PQLY…SEDL, PVTI…QTSK, LNNL…IFTS, PNLN…NYMG, MASL…AFKG, SLTH…SLKG, ANTL…FSPY, TNLK…LMAL, LKLL…HASL, and AKKL…WFRT. Residues Asn-402 and Asn-407 are each glycosylated (N-linked (GlcNAc...) asparagine). The N-linked (GlcNAc...) asparagine glycan is linked to Asn-533. In terms of domain architecture, LRRCT spans 597 to 635; sequence FGENKGIHVADLSEITCLDLNYRRHKVVLTDAVYCGFTN. The chain crosses the membrane as a helical span at residues 641-661; that stretch reads VVWYILLFVTVSVSIMGISVI. Over 662–685 the chain is Cytoplasmic; sequence YMLTFKPRMLPRVIKKKCWRPTSY.

Belongs to the LRRC32/LRRC33 family.

The protein resides in the cell membrane. Its subcellular location is the endoplasmic reticulum membrane. Functionally, key regulator of transforming growth factor beta-1 (TGFB1) specifically required for microglia function in the nervous system. Required for activation of latent TGF-beta-1 in macrophages and microglia: associates specifically via disulfide bonds with the Latency-associated peptide (LAP), which is the regulatory chain of TGFB1, and regulates integrin-dependent activation of TGF-beta-1. TGF-beta-1 activation mediated by lrrc33/nrros is highly localized: there is little spreading of TGF-beta-1 activated from one microglial cell to neighboring microglia, suggesting the existence of localized and selective activation of TGF-beta-1 by lrrc33/nrros. The chain is Transforming growth factor beta activator LRRC33 from Danio rerio (Zebrafish).